A 360-amino-acid chain; its full sequence is Serine/threonine-protein kinase SAPK4 (360 aa).

Residues 4–260 (YEAVRDIGSG…MKEIKSHPWF (257 aa)) enclose the Protein kinase domain. Residues 10-18 (IGSGNFGVA) and Lys33 contribute to the ATP site. Residue Asp123 is the Proton acceptor of the active site. Positions 303-360 (TMPKSSRTGYWSDAGSDEEEKEEEERPEENEEEEEDEYDKRVKEVHASGELRMSSLRI) are disordered. Residues 317-339 (GSDEEEKEEEERPEENEEEEEDE) are compositionally biased toward acidic residues. Residues 340 to 351 (YDKRVKEVHASG) are compositionally biased toward basic and acidic residues.

It belongs to the protein kinase superfamily. Ser/Thr protein kinase family. In terms of processing, may be phosphorylated. As to expression, expressed in leaf blades, leaf sheaths and roots. Expressed in shoots and roots of young seedlings.

It carries out the reaction L-seryl-[protein] + ATP = O-phospho-L-seryl-[protein] + ADP + H(+). It catalyses the reaction L-threonyl-[protein] + ATP = O-phospho-L-threonyl-[protein] + ADP + H(+). Its activity is regulated as follows. Activated by hyperosmotic stress. Functionally, may play a role in signal transduction of hyperosmotic response. This chain is Serine/threonine-protein kinase SAPK4 (SAPK4), found in Oryza sativa subsp. japonica (Rice).